The primary structure comprises 475 residues: UDP-N-acetylmuramoylalanine--D-glutamate ligase (475 aa).

130 to 136 (GTNGKTT) provides a ligand contact to ATP.

The protein belongs to the MurCDEF family.

The protein localises to the cytoplasm. It carries out the reaction UDP-N-acetyl-alpha-D-muramoyl-L-alanine + D-glutamate + ATP = UDP-N-acetyl-alpha-D-muramoyl-L-alanyl-D-glutamate + ADP + phosphate + H(+). It functions in the pathway cell wall biogenesis; peptidoglycan biosynthesis. Cell wall formation. Catalyzes the addition of glutamate to the nucleotide precursor UDP-N-acetylmuramoyl-L-alanine (UMA). In Corynebacterium efficiens (strain DSM 44549 / YS-314 / AJ 12310 / JCM 11189 / NBRC 100395), this protein is UDP-N-acetylmuramoylalanine--D-glutamate ligase.